We begin with the raw amino-acid sequence, 130 residues long: Small ribosomal subunit protein uS9 (130 aa).

The segment at 104–130 (LTRDPRMKERRKYGLKKARKAPQFSKR) is disordered. Basic residues predominate over residues 111-130 (KERRKYGLKKARKAPQFSKR).

Belongs to the universal ribosomal protein uS9 family.

This chain is Small ribosomal subunit protein uS9, found in Moorella thermoacetica (strain ATCC 39073 / JCM 9320).